We begin with the raw amino-acid sequence, 118 residues long: BLOC-1-related complex subunit 8 (118 aa).

The segment covering 98–107 (KEQISNSQGR) has biased composition (polar residues). The tract at residues 98-118 (KEQISNSQGRSPHVSAPSASS) is disordered.

This sequence belongs to the BORCS8 family.

Its subcellular location is the lysosome membrane. Its function is as follows. As part of a BORC-like complex, it may play a role in the movement and localization of lysosomes at the cell periphery. Associated with the cytosolic face of lysosomes, this complex may couple lysosomes to microtubule plus-end-directed kinesin motors, driving lysosome movement toward the cell periphery. This chain is BLOC-1-related complex subunit 8, found in Tetraodon nigroviridis (Spotted green pufferfish).